A 360-amino-acid polypeptide reads, in one-letter code: Photosystem II protein D1 3 (360 aa).

3 consecutive transmembrane segments (helical) span residues 29–46 (YVGW…TATI), 118–133 (HFLL…QWEL), and 142–156 (WICV…AAFA). Position 118 (His118) interacts with chlorophyll a. Tyr126 is a pheophytin a binding site. [CaMn4O5] cluster is bound by residues Asp170 and Glu189. A helical membrane pass occupies residues 197-218 (FHMLGVAGVFGGSLFSAMHGSL). His198 provides a ligand contact to chlorophyll a. A quinone contacts are provided by residues His215 and 264–265 (SF). A Fe cation-binding site is contributed by His215. His272 serves as a coordination point for Fe cation. Residues 274-288 (FLGAWPVVGIWFTSM) traverse the membrane as a helical segment. Residues His332, Glu333, Asp342, and Ala344 each coordinate [CaMn4O5] cluster. The propeptide occupies 345-360 (AGEATPVALTAPSIHG).

Belongs to the reaction center PufL/M/PsbA/D family. PSII is composed of 1 copy each of membrane proteins PsbA, PsbB, PsbC, PsbD, PsbE, PsbF, PsbH, PsbI, PsbJ, PsbK, PsbL, PsbM, PsbT, PsbX, PsbY, PsbZ, Psb30/Ycf12, peripheral proteins PsbO, CyanoQ (PsbQ), PsbU, PsbV and a large number of cofactors. It forms dimeric complexes. The D1/D2 heterodimer binds P680, chlorophylls that are the primary electron donor of PSII, and subsequent electron acceptors. It shares a non-heme iron and each subunit binds pheophytin, quinone, additional chlorophylls, carotenoids and lipids. D1 provides most of the ligands for the Mn4-Ca-O5 cluster of the oxygen-evolving complex (OEC). There is also a Cl(-1) ion associated with D1 and D2, which is required for oxygen evolution. The PSII complex binds additional chlorophylls, carotenoids and specific lipids. serves as cofactor. Post-translationally, tyr-161 forms a radical intermediate that is referred to as redox-active TyrZ, YZ or Y-Z. In terms of processing, C-terminally processed by CtpA; processing is essential to allow assembly of the oxygen-evolving complex and thus photosynthetic growth.

The protein resides in the cellular thylakoid membrane. The catalysed reaction is 2 a plastoquinone + 4 hnu + 2 H2O = 2 a plastoquinol + O2. In terms of biological role, photosystem II (PSII) is a light-driven water:plastoquinone oxidoreductase that uses light energy to abstract electrons from H(2)O, generating O(2) and a proton gradient subsequently used for ATP formation. It consists of a core antenna complex that captures photons, and an electron transfer chain that converts photonic excitation into a charge separation. The D1/D2 (PsbA/PsbD) reaction center heterodimer binds P680, the primary electron donor of PSII as well as several subsequent electron acceptors. This Synechococcus sp. (strain ATCC 27144 / PCC 6301 / SAUG 1402/1) (Anacystis nidulans) protein is Photosystem II protein D1 3.